The primary structure comprises 892 residues: MTQYTPMIQQYLKVKADYQDAFLFFRLGDFYEMFFEDAVKAAHELEITLTSRDGGSSERIPMCGVPYHAAKNYIEQLVEKGYKVAVCEQVEDPKTAKGVVRREVVQLITPGTMMEGRTIDEKENNFLAALTHFEDGSYALACNDLTTGQNTVTLLTGSVEDILLEVYATGSKEIVVDSSFSKDELNKLTETLKMTISYEDATAIPEGLEHLVKNVSQAKLIKAVGRLFNYVIRTQKRSLDHLQPVEIYYTNQFMKIDVHSKRNLELTETLRTKEKTGSLLWLLDKTKTAMGGRMLKQWMERPLIQKERIEERLEMVETFVNDYFLREDLKEKLKEVYDLERLAGKVAFGNVNARDLLQLRRSLLQVPAILEAISLLDNAYAARLIQGADPCESLTELLGRSIQENPPLSIKDGDIIKDGYNDKLDQYRYVSKNGKTWIAELEKRERDITGIKSLKIGYNRIFGYYIEVTKANLGALPEGRYERKQTLANAERFITDELKEKETLILEAEEKIVQLEYDLFTALREEVKVFIPKLQHLAKVISELDVLQSFATVSEEEQFVKPVLTTKREIFIKDGRHPVVEKVLNGKLYVPNDCIMPENMDVFLITGPNMSGKSTYMRQLALVTVMSQIGCFVPATEAVLPVFDQIFTRIGAADDLISGQSTFMVEMLEAKNAIANASERSLILFDEIGRGTSTYDGMALAQAIIEHIHDQIGAKTLFSTHYHELTVLEESLDQLKNVHVSAIEENGKVVFLHKIQDGAADKSYGIHVAQLAELPDSLIARAKEVLAQLEGQEEIIIPKRVEVKMQEQEVIPEPVVVKEAPVEIEETKVENEEESQLSFFGGEQSPKKQDKPVLDTKETAVLAQIKKIDLLDMTPLEAMNELYRLQKKLKKG.

607 to 614 (GPNMSGKS) provides a ligand contact to ATP. Residues 833–854 (EESQLSFFGGEQSPKKQDKPVL) form a disordered region. The span at 845–854 (SPKKQDKPVL) shows a compositional bias: basic and acidic residues.

The protein belongs to the DNA mismatch repair MutS family.

This protein is involved in the repair of mismatches in DNA. It is possible that it carries out the mismatch recognition step. This protein has a weak ATPase activity. The protein is DNA mismatch repair protein MutS of Bacillus cereus (strain Q1).